The following is a 177-amino-acid chain: Transcription termination/antitermination protein NusG (177 aa).

Residues 128–156 (ETVKVIDGPFANFTGSIEEIDYDKSKVKV) form the KOW domain.

It belongs to the NusG family.

Participates in transcription elongation, termination and antitermination. Stimulates RNA polymerase pausing at U107 and U144 in the trp leader. NusG-stimulated pausing is sequence specific. Does not affect trp leader termination. In Bacillus subtilis (strain 168), this protein is Transcription termination/antitermination protein NusG.